We begin with the raw amino-acid sequence, 582 residues long: Beta-glucosidase 28 (582 aa).

The signal sequence occupies residues 1–21; that stretch reads MKMHFFILLVITSWLSEKITS. A beta-D-glucoside is bound by residues Q48, H151, and 196-197; that span reads NE. The active-site Proton donor is the E197. Cysteines 216 and 224 form a disulfide. N255 and N330 each carry an N-linked (GlcNAc...) asparagine glycan. A beta-D-glucoside is bound at residue Y340. A glycan (N-linked (GlcNAc...) asparagine) is linked at N370. E412 lines the a beta-D-glucoside pocket. E412 acts as the Nucleophile in catalysis. N-linked (GlcNAc...) asparagine glycosylation occurs at N430. Residues W462, 469 to 470, and F478 each bind a beta-D-glucoside; that span reads EW. 2 N-linked (GlcNAc...) asparagine glycosylation sites follow: N521 and N544.

The protein belongs to the glycosyl hydrolase 1 family.

The enzyme catalyses Hydrolysis of terminal, non-reducing beta-D-glucosyl residues with release of beta-D-glucose.. This Arabidopsis thaliana (Mouse-ear cress) protein is Beta-glucosidase 28.